The primary structure comprises 412 residues: Subtilisin-like protease 6 (412 aa).

Residues 1-20 (MGFITKAIPIVLAALSTVNG) form the signal peptide. Residues 21–127 (AKILEAGPHA…VRTSTNGTNL (107 aa)) constitute a propeptide that is removed on maturation. One can recognise an Inhibitor I9 domain in the interval 36–120 (KYIVVMKREV…YIEPDFVVRT (85 aa)). Asn123 and Asn126 each carry an N-linked (GlcNAc...) asparagine glycan. Residues 135 to 412 (SWGLARVSSK…SKLIYNGSGK (278 aa)) enclose the Peptidase S8 domain. Residues Asp167 and His198 each act as charge relay system in the active site. 2 N-linked (GlcNAc...) asparagine glycosylation sites follow: Asn252 and Asn264. Ser358 (charge relay system) is an active-site residue. A glycan (N-linked (GlcNAc...) asparagine) is linked at Asn408.

This sequence belongs to the peptidase S8 family.

The protein localises to the secreted. Secreted subtilisin-like serine protease with keratinolytic activity that contributes to pathogenicity. The sequence is that of Subtilisin-like protease 6 (SUB6) from Trichophyton tonsurans (Scalp ringworm fungus).